Reading from the N-terminus, the 275-residue chain is Trans-aconitate 2-methyltransferase (275 aa).

The protein belongs to the methyltransferase superfamily. Tam family.

It is found in the cytoplasm. The enzyme catalyses trans-aconitate + S-adenosyl-L-methionine = (E)-3-(methoxycarbonyl)pent-2-enedioate + S-adenosyl-L-homocysteine. Functionally, catalyzes the S-adenosylmethionine monomethyl esterification of trans-aconitate. This Pseudomonas paraeruginosa (strain DSM 24068 / PA7) (Pseudomonas aeruginosa (strain PA7)) protein is Trans-aconitate 2-methyltransferase.